A 526-amino-acid chain; its full sequence is Glucomannan 4-beta-mannosyltransferase 1 (526 aa).

Residues 31–51 (VIIPLLKLAVIVCSVMSIMLF) form a helical membrane-spanning segment. The active site involves D130. Residues D189 and D191 each contribute to the substrate site. Residue D283 is part of the active site. 4 helical membrane passes run 362–382 (IVAH…CVIV), 399–419 (ITIL…LWIL), 477–497 (PLEI…LLFG), and 501–521 (FFVY…GLVG).

It belongs to the glycosyltransferase 2 family. Plant cellulose synthase-like A subfamily.

The protein resides in the golgi apparatus membrane. It carries out the reaction GDP-mannose + (glucomannan)n = GDP + (glucomannan)n+1.. Its function is as follows. Possesses 4-beta-mannosyltransferase activity on mannan using GDP-mannose. The beta-1,4-mannan product is the backbone for galactomannan synthesis by galactomannan galactosyltransferase. The galactomannan is a hemicellulosic storage polysaccharide accumulated in the form of secondary wall thickenings in the seed endosperm. This Cyamopsis tetragonoloba (Guar) protein is Glucomannan 4-beta-mannosyltransferase 1.